The following is a 633-amino-acid chain: Probable sodium/potassium/calcium exchanger CG1090 (633 aa).

An N-terminal signal peptide occupies residues Met-1–Gly-21. The Extracellular portion of the chain corresponds to Asp-22 to His-111. A helical membrane pass occupies residues Gly-112–Cys-132. The Cytoplasmic segment spans residues Asp-133–Thr-157. The Alpha-1 repeat unit spans residues Val-153 to Phe-193. A helical membrane pass occupies residues Phe-158–Ala-178. The Extracellular portion of the chain corresponds to Lys-179–Asp-181. The chain crosses the membrane as a helical span at residues Ile-182–Cys-202. Residues Ala-203 to Asp-220 are Cytoplasmic-facing. 2 helical membrane passes run Cys-221 to Ser-241 and Cys-242 to Asn-262. At Thr-263–Pro-427 the chain is on the extracellular side. Polar residues-rich tracts occupy residues Tyr-298–Lys-310, Ala-320–Asn-333, and Gln-395–Gly-405. The tract at residues Tyr-298–Asp-422 is disordered. The span at Lys-411 to Asp-422 shows a compositional bias: basic and acidic residues. Residues Met-428 to Cys-448 form a helical membrane-spanning segment. Over Lys-449–Phe-468 the chain is Cytoplasmic. The chain crosses the membrane as a helical span at residues Leu-469 to Ile-489. Residues Gly-490–Met-500 lie on the Extracellular side of the membrane. Residues Gly-501 to Ile-521 traverse the membrane as a helical segment. The stretch at Ala-506 to Asn-537 is one Alpha-2 repeat. Residues Lys-522–Gly-535 are Cytoplasmic-facing. The chain crosses the membrane as a helical span at residues Ser-536–Ile-556. Over Lys-557–Gly-568 the chain is Extracellular. The helical transmembrane segment at Leu-569–Leu-589 threads the bilayer. The Cytoplasmic portion of the chain corresponds to Asn-590 to Arg-597. Residues Leu-598–Leu-618 traverse the membrane as a helical segment. Topologically, residues Asn-619 to Tyr-633 are extracellular.

The protein belongs to the Ca(2+):cation antiporter (CaCA) (TC 2.A.19) family. SLC24A subfamily.

The protein resides in the membrane. Functionally, may function in the removal and maintenance of calcium homeostasis. Transports one Ca(2+) and 1 K(+) in exchange for 4 Na(+). The sequence is that of Probable sodium/potassium/calcium exchanger CG1090 from Drosophila melanogaster (Fruit fly).